Consider the following 553-residue polypeptide: Probable cytochrome P450 301a1, mitochondrial (553 aa).

Cys-502 is a heme binding site.

Belongs to the cytochrome P450 family. Heme serves as cofactor.

It is found in the mitochondrion membrane. The polypeptide is Probable cytochrome P450 301a1, mitochondrial (Cyp301a1) (Drosophila melanogaster (Fruit fly)).